Consider the following 355-residue polypeptide: Peptide chain release factor 1 (355 aa).

Residue Gln233 is modified to N5-methylglutamine.

This sequence belongs to the prokaryotic/mitochondrial release factor family. Post-translationally, methylated by PrmC. Methylation increases the termination efficiency of RF1.

The protein resides in the cytoplasm. In terms of biological role, peptide chain release factor 1 directs the termination of translation in response to the peptide chain termination codons UAG and UAA. The polypeptide is Peptide chain release factor 1 (Dehalococcoides mccartyi (strain ATCC BAA-2100 / JCM 16839 / KCTC 5957 / BAV1)).